A 116-amino-acid polypeptide reads, in one-letter code: MNLITTIITITITLSAVLATISFWLPQISPDAEKLSPYECGFDPLGSARLPFSLRFFLIAILFLLFDLEIALLLPLPWGDQLSTPTLTLIWSTAVLALLTLGLIYEWTQGGLEWAE.

Helical transmembrane passes span L3–F23, F56–L76, and L87–W107.

This sequence belongs to the complex I subunit 3 family.

The protein localises to the mitochondrion membrane. The catalysed reaction is a ubiquinone + NADH + 5 H(+)(in) = a ubiquinol + NAD(+) + 4 H(+)(out). Its function is as follows. Core subunit of the mitochondrial membrane respiratory chain NADH dehydrogenase (Complex I) that is believed to belong to the minimal assembly required for catalysis. Complex I functions in the transfer of electrons from NADH to the respiratory chain. The immediate electron acceptor for the enzyme is believed to be ubiquinone. The polypeptide is NADH-ubiquinone oxidoreductase chain 3 (MT-ND3) (Oncorhynchus keta (Chum salmon)).